Consider the following 294-residue polypeptide: ATP synthase gamma chain (294 aa).

Belongs to the ATPase gamma chain family. As to quaternary structure, F-type ATPases have 2 components, CF(1) - the catalytic core - and CF(0) - the membrane proton channel. CF(1) has five subunits: alpha(3), beta(3), gamma(1), delta(1), epsilon(1). CF(0) has three main subunits: a, b and c.

The protein resides in the cell inner membrane. Its function is as follows. Produces ATP from ADP in the presence of a proton gradient across the membrane. The gamma chain is believed to be important in regulating ATPase activity and the flow of protons through the CF(0) complex. This is ATP synthase gamma chain from Rhizobium etli (strain CIAT 652).